We begin with the raw amino-acid sequence, 62 residues long: Photosystem II reaction center protein Z (62 aa).

The next 2 helical transmembrane spans lie at 8–28 (SVFALVAISFLLVVGVPVVLA) and 41–61 (FSGASLWIALVFLVGVLNSFI).

This sequence belongs to the PsbZ family. In terms of assembly, PSII is composed of 1 copy each of membrane proteins PsbA, PsbB, PsbC, PsbD, PsbE, PsbF, PsbH, PsbI, PsbJ, PsbK, PsbL, PsbM, PsbT, PsbY, PsbZ, Psb30/Ycf12, at least 3 peripheral proteins of the oxygen-evolving complex and a large number of cofactors. It forms dimeric complexes.

Its subcellular location is the plastid. It is found in the chloroplast thylakoid membrane. Its function is as follows. May control the interaction of photosystem II (PSII) cores with the light-harvesting antenna, regulates electron flow through the 2 photosystem reaction centers. PSII is a light-driven water plastoquinone oxidoreductase, using light energy to abstract electrons from H(2)O, generating a proton gradient subsequently used for ATP formation. The chain is Photosystem II reaction center protein Z from Chaetosphaeridium globosum (Charophycean green alga).